The following is a 432-amino-acid chain: Bouquet formation protein 4 (432 aa).

The interval 1–21 (MTENEKSRSLPAERNPLYKDD) is disordered. One can recognise an HTH APSES-type domain in the interval 38 to 147 (EFPDGPATFV…SSTPSTYATP (110 aa)). Positions 73 to 94 (ATSMFRSAFPKATQEEEDLEMR) form a DNA-binding region, H-T-H motif. Low complexity-rich tracts occupy residues 139–152 (STPSTYATPSRPTA) and 163–172 (ESSTSATTTS). Disordered regions lie at residues 139 to 283 (STPS…GKIR) and 364 to 384 (KSSIRSSPKSKKRSREDFEEN). The span at 180–228 (RLAEHLENSKKTILQHDNKEEDKEIHSEENETKDEIKSEKKEPEIKKQE) shows a compositional bias: basic and acidic residues. Residues 229–241 (GGSSTEKVGQPSS) show a composition bias toward polar residues.

As to quaternary structure, interacts with rap1.

It localises to the cytoplasm. The protein resides in the nucleus. The protein localises to the nucleus inner membrane. Its function is as follows. Connects telomeres to the nuclear envelop (NE) during both vegetative growth and meiosis. This connection ensures clustering of telomeres to the spindle pole body (SPB) when cells enter meiotic prophase. The polypeptide is Bouquet formation protein 4 (bqt4) (Schizosaccharomyces pombe (strain 972 / ATCC 24843) (Fission yeast)).